A 155-amino-acid chain; its full sequence is 6,7-dimethyl-8-ribityllumazine synthase (155 aa).

Residues phenylalanine 24, 58-60 (AFE), and 82-84 (VII) contribute to the 5-amino-6-(D-ribitylamino)uracil site. 87-88 (ST) is a (2S)-2-hydroxy-3-oxobutyl phosphate binding site. Residue histidine 90 is the Proton donor of the active site. Residue phenylalanine 115 participates in 5-amino-6-(D-ribitylamino)uracil binding. Arginine 129 serves as a coordination point for (2S)-2-hydroxy-3-oxobutyl phosphate.

It belongs to the DMRL synthase family.

The catalysed reaction is (2S)-2-hydroxy-3-oxobutyl phosphate + 5-amino-6-(D-ribitylamino)uracil = 6,7-dimethyl-8-(1-D-ribityl)lumazine + phosphate + 2 H2O + H(+). The protein operates within cofactor biosynthesis; riboflavin biosynthesis; riboflavin from 2-hydroxy-3-oxobutyl phosphate and 5-amino-6-(D-ribitylamino)uracil: step 1/2. Catalyzes the formation of 6,7-dimethyl-8-ribityllumazine by condensation of 5-amino-6-(D-ribitylamino)uracil with 3,4-dihydroxy-2-butanone 4-phosphate. This is the penultimate step in the biosynthesis of riboflavin. The polypeptide is 6,7-dimethyl-8-ribityllumazine synthase (Chlorobium chlorochromatii (strain CaD3)).